Reading from the N-terminus, the 406-residue chain is MAMSEQPQPVAGAAASTTKARTSFGILGAISLSHLLNDMIQSLILAIYPLLQSEFSLTFMQIGMITLTFQLASSLLQPVVGYWTDKYPMPWSLPIGMCFTLSGLVLLALAGSFGAVLLAAALVGTGSSVFHPESSRVARMASGGRHGLAQSIFQVGGNFGSSLGPLLAAVIIAPYGKGNVAWFVLAALLAIVVLAQISRWYSAQHRMNKGKPKATIINPLPRNKVVLAVSILLILIFSKYFYMASISSYYTFYLMQKFGLSIQNAQLHLFAFLFAVAAGTVIGGPVGDKIGRKYVIWGSILGVAPFTLILPYASLHWTGVLTVIIGFILASAFSAILVYAQELLPGRIGMVSGLFFGFAFGMGGLGAAVLGLIADHTSIELVYKICAFLPLLGMLTIFLPDNRHKD.

Residues 1-42 (MAMSEQPQPVAGAAASTTKARTSFGILGAISLSHLLNDMIQS) lie on the Periplasmic side of the membrane. 2 helical membrane-spanning segments follow: residues 43-63 (LILAIYPLLQSEFSLTFMQIG) and 64-84 (MITLTFQLASSLLQPVVGYWT). The Periplasmic portion of the chain corresponds to 85 to 102 (DKYPMPWSLPIGMCFTLS). Residues 103 to 123 (GLVLLALAGSFGAVLLAAALV) form a helical membrane-spanning segment. Topologically, residues 124 to 151 (GTGSSVFHPESSRVARMASGGRHGLAQS) are cytoplasmic. Residues 152 to 172 (IFQVGGNFGSSLGPLLAAVII) form a helical membrane-spanning segment. Topologically, residues 173 to 177 (APYGK) are periplasmic. A helical transmembrane segment spans residues 178–198 (GNVAWFVLAALLAIVVLAQIS). Residues 199-225 (RWYSAQHRMNKGKPKATIINPLPRNKV) lie on the Cytoplasmic side of the membrane. Residues 226–246 (VLAVSILLILIFSKYFYMASI) form a helical membrane-spanning segment. Over 247 to 266 (SSYYTFYLMQKFGLSIQNAQ) the chain is Periplasmic. Residues 267-287 (LHLFAFLFAVAAGTVIGGPVG) form a helical membrane-spanning segment. Topologically, residues 288-294 (DKIGRKY) are cytoplasmic. A helical membrane pass occupies residues 295–315 (VIWGSILGVAPFTLILPYASL). Topologically, residues 316-319 (HWTG) are periplasmic. A helical membrane pass occupies residues 320–340 (VLTVIIGFILASAFSAILVYA). Over 341 to 353 (QELLPGRIGMVSG) the chain is Cytoplasmic. A helical membrane pass occupies residues 354–374 (LFFGFAFGMGGLGAAVLGLIA). Residues 375-378 (DHTS) are Periplasmic-facing. A helical transmembrane segment spans residues 379–399 (IELVYKICAFLPLLGMLTIFL). Over 400–406 (PDNRHKD) the chain is Cytoplasmic.

This sequence belongs to the major facilitator superfamily.

It localises to the cell inner membrane. Its function is as follows. Confers the resistance against fosmidomycin. This chain is Fosmidomycin resistance protein (fsr), found in Escherichia coli (strain K12).